The sequence spans 243 residues: Small ribosomal subunit protein uS3 (243 aa).

The 72-residue stretch at 39-110 (IRTFIEKKYG…QVRINVVEVE (72 aa)) folds into the KH type-2 domain. The interval 216–243 (QTIPVGANPKRKASRRPQQFEDRSNENS) is disordered. Residues 233-243 (QQFEDRSNENS) show a composition bias toward basic and acidic residues.

Belongs to the universal ribosomal protein uS3 family. In terms of assembly, part of the 30S ribosomal subunit. Forms a tight complex with proteins S10 and S14.

In terms of biological role, binds the lower part of the 30S subunit head. Binds mRNA in the 70S ribosome, positioning it for translation. This chain is Small ribosomal subunit protein uS3, found in Prochlorococcus marinus (strain MIT 9215).